Reading from the N-terminus, the 79-residue chain is MASLMEVRDMLALQGRMEAKQLSARLRTPQPLIDAMLERMEAMGKVVRISETSEGCLSGSCKSCPEGKAACQQEWWALR.

4 residues coordinate iron-sulfur cluster: cysteine 56, cysteine 61, cysteine 64, and cysteine 71.

Belongs to the FeoC family.

In terms of biological role, may function as a transcriptional regulator that controls feoABC expression. The polypeptide is Probable [Fe-S]-dependent transcriptional repressor (Klebsiella pneumoniae (strain 342)).